We begin with the raw amino-acid sequence, 315 residues long: ATP synthase gamma chain (315 aa).

Belongs to the ATPase gamma chain family. As to quaternary structure, F-type ATPases have 2 components, CF(1) - the catalytic core - and CF(0) - the membrane proton channel. CF(1) has five subunits: alpha(3), beta(3), gamma(1), delta(1), epsilon(1). CF(0) has three main subunits: a, b and c.

It is found in the cellular thylakoid membrane. Its function is as follows. Produces ATP from ADP in the presence of a proton gradient across the membrane. The gamma chain is believed to be important in regulating ATPase activity and the flow of protons through the CF(0) complex. The chain is ATP synthase gamma chain from Trichormus variabilis (strain ATCC 29413 / PCC 7937) (Anabaena variabilis).